Reading from the N-terminus, the 259-residue chain is Large ribosomal subunit protein uL3c (259 aa).

A chloroplast-targeting transit peptide spans 1 to 37 (LKTTPLTLRSPFLHRLPLRALKTHKPTSLHISKSSIS). The disordered stretch occupies residues 176–211 (MTHGSKSHRQLGSIGAGTTPGRVYKGKKMPGRMGGT). Residues 199–211 (YKGKKMPGRMGGT) show a composition bias toward basic residues.

This sequence belongs to the universal ribosomal protein uL3 family. As to quaternary structure, part of the 50S ribosomal subunit.

The protein resides in the plastid. It localises to the chloroplast. In terms of biological role, one of the primary rRNA binding proteins, it binds directly near the 3'-end of the 23S rRNA, where it nucleates assembly of the 50S subunit. The protein is Large ribosomal subunit protein uL3c (RPL3) of Nicotiana tabacum (Common tobacco).